A 351-amino-acid polypeptide reads, in one-letter code: Anthranilate phosphoribosyltransferase (351 aa).

5-phospho-alpha-D-ribose 1-diphosphate-binding positions include G84, 87–88 (GD), 95–98 (NISS), 113–121 (KHGNRGASS), and A125. G84 is an anthranilate binding site. Position 97 (S97) interacts with Mg(2+). N116 is a binding site for anthranilate. R171 is a binding site for anthranilate. 2 residues coordinate Mg(2+): D229 and K230.

It belongs to the anthranilate phosphoribosyltransferase family. Homodimer. Mg(2+) serves as cofactor.

The catalysed reaction is N-(5-phospho-beta-D-ribosyl)anthranilate + diphosphate = 5-phospho-alpha-D-ribose 1-diphosphate + anthranilate. It participates in amino-acid biosynthesis; L-tryptophan biosynthesis; L-tryptophan from chorismate: step 2/5. Its function is as follows. Catalyzes the transfer of the phosphoribosyl group of 5-phosphorylribose-1-pyrophosphate (PRPP) to anthranilate to yield N-(5'-phosphoribosyl)-anthranilate (PRA). The protein is Anthranilate phosphoribosyltransferase of Clavibacter sepedonicus (Clavibacter michiganensis subsp. sepedonicus).